The primary structure comprises 118 residues: Large ribosomal subunit protein bL20 (118 aa).

Belongs to the bacterial ribosomal protein bL20 family.

Functionally, binds directly to 23S ribosomal RNA and is necessary for the in vitro assembly process of the 50S ribosomal subunit. It is not involved in the protein synthesizing functions of that subunit. This Azotobacter vinelandii protein is Large ribosomal subunit protein bL20.